Here is a 311-residue protein sequence, read N- to C-terminus: Protoheme IX farnesyltransferase (311 aa).

8 helical membrane passes run 19 to 39 (VLAYIALTKPRVIELLLVATI), 55 to 75 (ILATLFGGWMGAASANTLNCV), 101 to 121 (NAFVFGVVLGLASFAWLWWQA), 123 to 143 (LLSGALVVATILFYVFVYTLG), 169 to 189 (AVTGTIGWPALALFGVIFFWT), 221 to 241 (VTKQIVIYTWLTVLTTLALVP), 242 to 262 (ATGVIYAAVALVAGAWFLLMA), and 290 to 310 (VVFCGLAVDSVLGWDTIGSFF).

Belongs to the UbiA prenyltransferase family. Protoheme IX farnesyltransferase subfamily.

It is found in the cell membrane. It carries out the reaction heme b + (2E,6E)-farnesyl diphosphate + H2O = Fe(II)-heme o + diphosphate. It participates in porphyrin-containing compound metabolism; heme O biosynthesis; heme O from protoheme: step 1/1. In terms of biological role, converts heme B (protoheme IX) to heme O by substitution of the vinyl group on carbon 2 of heme B porphyrin ring with a hydroxyethyl farnesyl side group. The sequence is that of Protoheme IX farnesyltransferase from Nocardia farcinica (strain IFM 10152).